The sequence spans 537 residues: Chaperonin GroEL 1 (537 aa).

ATP-binding positions include 29 to 32 (TLGP), 86 to 90 (DGTTT), Gly-413, and Asp-494.

This sequence belongs to the chaperonin (HSP60) family. In terms of assembly, forms a cylinder of 14 subunits composed of two heptameric rings stacked back-to-back. Interacts with the co-chaperonin GroES.

It is found in the cytoplasm. The enzyme catalyses ATP + H2O + a folded polypeptide = ADP + phosphate + an unfolded polypeptide.. Its function is as follows. Together with its co-chaperonin GroES, plays an essential role in assisting protein folding. The GroEL-GroES system forms a nano-cage that allows encapsulation of the non-native substrate proteins and provides a physical environment optimized to promote and accelerate protein folding. This is Chaperonin GroEL 1 from Mycobacterium leprae (strain TN).